A 131-amino-acid chain; its full sequence is Protein TAP2 (131 aa).

The first 22 residues, 1–22 (MAKSSPTYTVLFLLGLLALSTA), serve as a signal peptide directing secretion. A disordered region spans residues 75–101 (ARSGGETDVKKMEGSMPDQGKTAGRDQ).

In terms of tissue distribution, tapetum of anthers.

The sequence is that of Protein TAP2 (TAP2) from Antirrhinum majus (Garden snapdragon).